The following is a 171-amino-acid chain: Dual-action ribosomal maturation protein DarP (171 aa).

Residues 1 to 30 (MPKRPAENPEQSDDFVSKSQKKREMAERQE) are disordered.

The protein belongs to the DarP family.

It localises to the cytoplasm. Member of a network of 50S ribosomal subunit biogenesis factors which assembles along the 30S-50S interface, preventing incorrect 23S rRNA structures from forming. Promotes peptidyl transferase center (PTC) maturation. This chain is Dual-action ribosomal maturation protein DarP, found in Idiomarina loihiensis (strain ATCC BAA-735 / DSM 15497 / L2-TR).